We begin with the raw amino-acid sequence, 266 residues long: Putative carbamate hydrolase RutD (266 aa).

This sequence belongs to the AB hydrolase superfamily. Hydrolase RutD family.

It catalyses the reaction carbamate + 2 H(+) = NH4(+) + CO2. In terms of biological role, involved in pyrimidine catabolism. May facilitate the hydrolysis of carbamate, a reaction that can also occur spontaneously. The protein is Putative carbamate hydrolase RutD of Escherichia coli O26:H11 (strain 11368 / EHEC).